Here is a 462-residue protein sequence, read N- to C-terminus: ATP synthase subunit beta (462 aa).

Residue 151–158 (GGAGVGKT) coordinates ATP.

Belongs to the ATPase alpha/beta chains family. F-type ATPases have 2 components, CF(1) - the catalytic core - and CF(0) - the membrane proton channel. CF(1) has five subunits: alpha(3), beta(3), gamma(1), delta(1), epsilon(1). CF(0) has four main subunits: a(1), b(1), b'(1) and c(9-12).

The protein resides in the cell inner membrane. It carries out the reaction ATP + H2O + 4 H(+)(in) = ADP + phosphate + 5 H(+)(out). In terms of biological role, produces ATP from ADP in the presence of a proton gradient across the membrane. The catalytic sites are hosted primarily by the beta subunits. This Chlorobium limicola (strain DSM 245 / NBRC 103803 / 6330) protein is ATP synthase subunit beta.